The following is a 36-amino-acid chain: DNA binding protein ORF8 (36 aa).

This sequence belongs to the microviridae J protein family.

Its subcellular location is the virion. The protein resides in the host cytoplasm. Functionally, mediates ssDNA packaging into virion, it locates to the internal surface of the capsid. Additionally, plays a role in viral attachment to the host cell. The chain is DNA binding protein ORF8 from Chlamydia phage 1 (Bacteriophage Chp1).